The sequence spans 466 residues: 3-isopropylmalate dehydratase large subunit (466 aa).

Positions 347, 407, and 410 each coordinate [4Fe-4S] cluster.

It belongs to the aconitase/IPM isomerase family. LeuC type 1 subfamily. As to quaternary structure, heterodimer of LeuC and LeuD. It depends on [4Fe-4S] cluster as a cofactor.

It catalyses the reaction (2R,3S)-3-isopropylmalate = (2S)-2-isopropylmalate. Its pathway is amino-acid biosynthesis; L-leucine biosynthesis; L-leucine from 3-methyl-2-oxobutanoate: step 2/4. Its function is as follows. Catalyzes the isomerization between 2-isopropylmalate and 3-isopropylmalate, via the formation of 2-isopropylmaleate. This is 3-isopropylmalate dehydratase large subunit from Escherichia coli O45:K1 (strain S88 / ExPEC).